We begin with the raw amino-acid sequence, 126 residues long: Small ribosomal subunit protein bS16 (126 aa).

The interval 87-126 is disordered; that stretch reads ARSNPEKALPGKRALERVAEKKQKAEDAAAAAAAEASAAE. Over residues 99-113 the composition is skewed to basic and acidic residues; the sequence is RALERVAEKKQKAED. Residues 114 to 126 show a composition bias toward low complexity; sequence AAAAAAAEASAAE.

The protein belongs to the bacterial ribosomal protein bS16 family.

The chain is Small ribosomal subunit protein bS16 from Agrobacterium fabrum (strain C58 / ATCC 33970) (Agrobacterium tumefaciens (strain C58)).